We begin with the raw amino-acid sequence, 122 residues long: Large ribosomal subunit protein uL14 (122 aa).

Belongs to the universal ribosomal protein uL14 family. As to quaternary structure, part of the 50S ribosomal subunit. Forms a cluster with proteins L3 and L19. In the 70S ribosome, L14 and L19 interact and together make contacts with the 16S rRNA in bridges B5 and B8.

Its function is as follows. Binds to 23S rRNA. Forms part of two intersubunit bridges in the 70S ribosome. In Sorangium cellulosum (strain So ce56) (Polyangium cellulosum (strain So ce56)), this protein is Large ribosomal subunit protein uL14.